The sequence spans 377 residues: Chaperone protein DnaJ (377 aa).

One can recognise a J domain in the interval 5 to 70 (DYYQILGIPK…EKRSAYDQYG (66 aa)). The segment at 132-210 (GIKKEIQIPT…CHGQGRVETY (79 aa)) adopts a CR-type zinc-finger fold. The Zn(2+) site is built by Cys145, Cys148, Cys162, Cys165, Cys184, Cys187, Cys198, and Cys201. CXXCXGXG motif repeat units lie at residues 145 to 152 (CKTCYGSG), 162 to 169 (CSTCHGKG), 184 to 191 (CPTCHGKG), and 198 to 205 (CNLCHGQG).

The protein belongs to the DnaJ family. In terms of assembly, homodimer. Zn(2+) serves as cofactor.

The protein resides in the cytoplasm. Its function is as follows. Participates actively in the response to hyperosmotic and heat shock by preventing the aggregation of stress-denatured proteins and by disaggregating proteins, also in an autonomous, DnaK-independent fashion. Unfolded proteins bind initially to DnaJ; upon interaction with the DnaJ-bound protein, DnaK hydrolyzes its bound ATP, resulting in the formation of a stable complex. GrpE releases ADP from DnaK; ATP binding to DnaK triggers the release of the substrate protein, thus completing the reaction cycle. Several rounds of ATP-dependent interactions between DnaJ, DnaK and GrpE are required for fully efficient folding. Also involved, together with DnaK and GrpE, in the DNA replication of plasmids through activation of initiation proteins. This chain is Chaperone protein DnaJ, found in Buchnera aphidicola subsp. Acyrthosiphon pisum (strain Tuc7).